A 250-amino-acid polypeptide reads, in one-letter code: MAVTKLVLVRHGESQWNKENRFTGWYDVDLSEKGVSEAKAAGKLLKEEGYSFDFAYTSVLKRAIHTLWNVLDELDQAWLPVEKSWKLNERHYGALQGLNKAETAEKYGDEQVKQWRRGFAVTPPELTKDDERYPGHDPRYAKLSEKELPLTESLALTIDRVIPYWNETILPRMKSGERVIIAAHGNSLRALVKYLDNMSEEGILELNIPTGVPLVYEFDENFKPLKRYYLGNADEIAAKAAAVANQGKAK.

Residues 10 to 17, 23 to 24, arginine 62, 89 to 92, lysine 100, 116 to 117, and 185 to 186 contribute to the substrate site; these read RHGESQWN, TG, ERHY, RR, and GN. The Tele-phosphohistidine intermediate role is filled by histidine 11. Glutamate 89 acts as the Proton donor/acceptor in catalysis.

This sequence belongs to the phosphoglycerate mutase family. BPG-dependent PGAM subfamily. Homodimer.

The catalysed reaction is (2R)-2-phosphoglycerate = (2R)-3-phosphoglycerate. It functions in the pathway carbohydrate degradation; glycolysis; pyruvate from D-glyceraldehyde 3-phosphate: step 3/5. Functionally, catalyzes the interconversion of 2-phosphoglycerate and 3-phosphoglycerate. The sequence is that of 2,3-bisphosphoglycerate-dependent phosphoglycerate mutase from Shigella dysenteriae serotype 1 (strain Sd197).